A 228-amino-acid chain; its full sequence is Leucyl/phenylalanyl-tRNA--protein transferase (228 aa).

It belongs to the L/F-transferase family.

It is found in the cytoplasm. It carries out the reaction N-terminal L-lysyl-[protein] + L-leucyl-tRNA(Leu) = N-terminal L-leucyl-L-lysyl-[protein] + tRNA(Leu) + H(+). The enzyme catalyses N-terminal L-arginyl-[protein] + L-leucyl-tRNA(Leu) = N-terminal L-leucyl-L-arginyl-[protein] + tRNA(Leu) + H(+). The catalysed reaction is L-phenylalanyl-tRNA(Phe) + an N-terminal L-alpha-aminoacyl-[protein] = an N-terminal L-phenylalanyl-L-alpha-aminoacyl-[protein] + tRNA(Phe). In terms of biological role, functions in the N-end rule pathway of protein degradation where it conjugates Leu, Phe and, less efficiently, Met from aminoacyl-tRNAs to the N-termini of proteins containing an N-terminal arginine or lysine. The chain is Leucyl/phenylalanyl-tRNA--protein transferase from Sulfurimonas denitrificans (strain ATCC 33889 / DSM 1251) (Thiomicrospira denitrificans (strain ATCC 33889 / DSM 1251)).